The sequence spans 528 residues: Tyrosine--tRNA ligase, cytoplasmic (528 aa).

Y39 provides a ligand contact to L-tyrosine. A 'HIGH' region motif is present at residues 44 to 52; the sequence is TTGKPHVAY. L-tyrosine is bound by residues Y166, Q170, D173, and Q188. The short motif at 222–226 is the 'KMSKS' region element; the sequence is KMSSS. The short motif at 242–247 is the Nuclear localization signal element; that stretch reads KKKLKK. A disordered region spans residues 335–364; it reads KLSNDAYPGASKQKTVPKGSTKNSGPEEID. Over residues 346-358 the composition is skewed to polar residues; it reads KQKTVPKGSTKNS. The tRNA-binding domain occupies 364–468; it reads DPSLLDLRVG…TGSAPGERIY (105 aa).

It belongs to the class-I aminoacyl-tRNA synthetase family. As to quaternary structure, homodimer.

Its subcellular location is the cytoplasm. The protein localises to the nucleus. It catalyses the reaction tRNA(Tyr) + L-tyrosine + ATP = L-tyrosyl-tRNA(Tyr) + AMP + diphosphate + H(+). Catalyzes the attachment of tyrosine to tRNA(Tyr) in a two-step reaction: tyrosine is first activated by ATP to form Tyr-AMP and then transferred to the acceptor end of tRNA(Tyr). The chain is Tyrosine--tRNA ligase, cytoplasmic (yars1) from Xenopus tropicalis (Western clawed frog).